Consider the following 249-residue polypeptide: Hydroxyacylglutathione hydrolase (249 aa).

7 residues coordinate Zn(2+): H54, H56, D58, H59, H113, D138, and H176.

This sequence belongs to the metallo-beta-lactamase superfamily. Glyoxalase II family. Monomer. Zn(2+) is required as a cofactor.

It carries out the reaction an S-(2-hydroxyacyl)glutathione + H2O = a 2-hydroxy carboxylate + glutathione + H(+). It participates in secondary metabolite metabolism; methylglyoxal degradation; (R)-lactate from methylglyoxal: step 2/2. Thiolesterase that catalyzes the hydrolysis of S-D-lactoyl-glutathione to form glutathione and D-lactic acid. This chain is Hydroxyacylglutathione hydrolase, found in Synechococcus sp. (strain CC9605).